Here is a 539-residue protein sequence, read N- to C-terminus: Eukaryotic translation initiation factor 3 subunit L (539 aa).

Residues 306–514 (TFSDILLYIQ…IHIADTKVSH (209 aa)) enclose the PCI domain.

The protein belongs to the eIF-3 subunit L family. As to quaternary structure, component of the eukaryotic translation initiation factor 3 (eIF-3) complex. The eIF-3 complex interacts with pix.

It is found in the cytoplasm. Functionally, component of the eukaryotic translation initiation factor 3 (eIF-3) complex, which is involved in protein synthesis of a specialized repertoire of mRNAs and, together with other initiation factors, stimulates binding of mRNA and methionyl-tRNAi to the 40S ribosome. The eIF-3 complex specifically targets and initiates translation of a subset of mRNAs involved in cell proliferation. This is Eukaryotic translation initiation factor 3 subunit L from Drosophila yakuba (Fruit fly).